We begin with the raw amino-acid sequence, 426 residues long: Lipid droplet localized protein (426 aa).

Residues 278–298 (FYGYLIGLWIMFLSIFVKYPF) traverse the membrane as a helical segment.

It belongs to the saccharopine dehydrogenase family.

Its subcellular location is the membrane. It localises to the lipid droplet. The sequence is that of Lipid droplet localized protein from Caenorhabditis elegans.